Here is a 250-residue protein sequence, read N- to C-terminus: Recombination protein RecR (250 aa).

A C4-type zinc finger spans residues 56 to 71 (CRICHNISQEDVCRIC). A Toprim domain is found at 79–227 (SIICVVEESK…TVTRLASGIP (149 aa)). The disordered stretch occupies residues 148-172 (LGDADTPADGESSGADAAETGNAKT).

Belongs to the RecR family.

Its function is as follows. May play a role in DNA repair. It seems to be involved in an RecBC-independent recombinational process of DNA repair. It may act with RecF and RecO. This chain is Recombination protein RecR, found in Corynebacterium jeikeium (strain K411).